Here is a 203-residue protein sequence, read N- to C-terminus: Urease accessory protein UreG (203 aa).

13-20 (GPVGSGKT) serves as a coordination point for GTP.

The protein belongs to the SIMIBI class G3E GTPase family. UreG subfamily. In terms of assembly, homodimer. UreD, UreF and UreG form a complex that acts as a GTP-hydrolysis-dependent molecular chaperone, activating the urease apoprotein by helping to assemble the nickel containing metallocenter of UreC. The UreE protein probably delivers the nickel.

It localises to the cytoplasm. Facilitates the functional incorporation of the urease nickel metallocenter. This process requires GTP hydrolysis, probably effectuated by UreG. The polypeptide is Urease accessory protein UreG (Psychromonas ingrahamii (strain DSM 17664 / CCUG 51855 / 37)).